We begin with the raw amino-acid sequence, 78 residues long: Conotoxin 6 (78 aa).

Residues 1-22 form the signal peptide; the sequence is MKLTCMMIVAVLFLTAWIFITA. A propeptide spanning residues 23–51 is cleaved from the precursor; the sequence is DNSRNGIENLPRMRRHEMKNPKASKLNKR. 3 disulfide bridges follow: Cys-53-Cys-69, Cys-60-Cys-73, and Cys-68-Cys-77.

It belongs to the conotoxin O1 superfamily. As to expression, expressed by the venom duct.

Its subcellular location is the secreted. In Conus imperialis (Imperial cone), this protein is Conotoxin 6.